Here is a 440-residue protein sequence, read N- to C-terminus: Ferredoxin--NADP reductase (440 aa).

Residues 17-75 (SRVFVYEVVGMRQNEETDQTNYPIRKSGSVFIRVPYNRMNQEMQRITRLGGKIVSIQTV) enclose the CpcD-like domain. The disordered stretch occupies residues 98–142 (AKSEGNGKATPVKTDSGAKGFAKPPAEEQLKKKDNKGNTMTQAKA). Basic and acidic residues predominate over residues 122–133 (PAEEQLKKKDNK). Residues 155–279 (NAPFIGKVIS…TGPVGKEMLL (125 aa)) form the FAD-binding FR-type domain. FAD-binding positions include 214–217 (RLYS), 235–237 (CVR), Y241, 253–255 (VCS), and T294. Positions 217 and 237 each coordinate NADP(+). Residues T294, 330–331 (VP), 360–361 (SR), 370–374 (RMYIQ), 399–400 (GL), and E438 contribute to the NADP(+) site.

The protein belongs to the ferredoxin--NADP reductase type 1 family. FAD serves as cofactor.

The protein resides in the cellular thylakoid membrane. The catalysed reaction is 2 reduced [2Fe-2S]-[ferredoxin] + NADP(+) + H(+) = 2 oxidized [2Fe-2S]-[ferredoxin] + NADPH. This Nostoc sp. (strain PCC 7120 / SAG 25.82 / UTEX 2576) protein is Ferredoxin--NADP reductase (petH).